The sequence spans 422 residues: Serine--tRNA ligase (422 aa).

229–231 (TAE) is an L-serine binding site. Residue 258–260 (RRE) participates in ATP binding. Position 281 (Glu-281) interacts with L-serine. 345–348 (EISS) contributes to the ATP binding site. Ser-379 is an L-serine binding site.

It belongs to the class-II aminoacyl-tRNA synthetase family. Type-1 seryl-tRNA synthetase subfamily. Homodimer. The tRNA molecule binds across the dimer.

It localises to the cytoplasm. The catalysed reaction is tRNA(Ser) + L-serine + ATP = L-seryl-tRNA(Ser) + AMP + diphosphate + H(+). It catalyses the reaction tRNA(Sec) + L-serine + ATP = L-seryl-tRNA(Sec) + AMP + diphosphate + H(+). It participates in aminoacyl-tRNA biosynthesis; selenocysteinyl-tRNA(Sec) biosynthesis; L-seryl-tRNA(Sec) from L-serine and tRNA(Sec): step 1/1. Catalyzes the attachment of serine to tRNA(Ser). Is also able to aminoacylate tRNA(Sec) with serine, to form the misacylated tRNA L-seryl-tRNA(Sec), which will be further converted into selenocysteinyl-tRNA(Sec). The polypeptide is Serine--tRNA ligase (Methanosarcina mazei (strain ATCC BAA-159 / DSM 3647 / Goe1 / Go1 / JCM 11833 / OCM 88) (Methanosarcina frisia)).